Here is an 88-residue protein sequence, read N- to C-terminus: Apolipoprotein C-I (88 aa).

The N-terminal stretch at 1–26 is a signal peptide; the sequence is MRLLLSLPVLLVALSVVLERPAPAQA.

Belongs to the apolipoprotein C1 family.

Its subcellular location is the secreted. Functionally, inhibitor of lipoprotein binding to the low density lipoprotein (LDL) receptor, LDL receptor-related protein, and very low density lipoprotein (VLDL) receptor. Associates with high density lipoproteins (HDL) and the triacylglycerol-rich lipoproteins in the plasma and makes up about 10% of the protein of the VLDL and 2% of that of HDL. Appears to interfere directly with fatty acid uptake and is also the major plasma inhibitor of cholesteryl ester transfer protein (CETP). Binds free fatty acids and reduces their intracellular esterification. Modulates the interaction of APOE with beta-migrating VLDL and inhibits binding of beta-VLDL to the LDL receptor-related protein. This chain is Apolipoprotein C-I (APOC1), found in Tupaia glis (Common tree shrew).